Here is a 249-residue protein sequence, read N- to C-terminus: Proteasome subunit alpha type-3 (249 aa).

This sequence belongs to the peptidase T1A family. As to quaternary structure, the 26S proteasome consists of a 20S proteasome core and two 19S regulatory subunits. The 20S proteasome core is composed of 28 subunits that are arranged in four stacked rings, resulting in a barrel-shaped structure. The two end rings are each formed by seven alpha subunits, and the two central rings are each formed by seven beta subunits. The catalytic chamber with the active sites is on the inside of the barrel.

The protein localises to the cytoplasm. It is found in the nucleus. Its function is as follows. The proteasome is a multicatalytic proteinase complex which is characterized by its ability to cleave peptides with Arg, Phe, Tyr, Leu, and Glu adjacent to the leaving group at neutral or slightly basic pH. The proteasome has an ATP-dependent proteolytic activity. This Spinacia oleracea (Spinach) protein is Proteasome subunit alpha type-3 (PAG1).